The sequence spans 163 residues: Small ribosomal subunit protein uS9 (163 aa).

Low complexity predominate over residues 1–25 (MAENTNNSAVTETEETTAAFTTETN). Residues 1–40 (MAENTNNSAVTETEETTAAFTTETNSGAGTGTSTIAPGYG) form a disordered region.

This sequence belongs to the universal ribosomal protein uS9 family.

The chain is Small ribosomal subunit protein uS9 from Bifidobacterium animalis subsp. lactis (strain AD011).